A 240-amino-acid polypeptide reads, in one-letter code: 1-acyl-sn-glycerol-3-phosphate acyltransferase (240 aa).

The short motif at 73 to 78 (HQNNYD) is the HXXXXD motif element.

Belongs to the 1-acyl-sn-glycerol-3-phosphate acyltransferase family.

The protein localises to the cell inner membrane. The enzyme catalyses a 1-acyl-sn-glycero-3-phosphate + an acyl-CoA = a 1,2-diacyl-sn-glycero-3-phosphate + CoA. It functions in the pathway phospholipid metabolism; CDP-diacylglycerol biosynthesis; CDP-diacylglycerol from sn-glycerol 3-phosphate: step 2/3. Functionally, converts lysophosphatidic acid (LPA) into phosphatidic acid by incorporating acyl moiety at the 2 position. In Haemophilus influenzae (strain ATCC 51907 / DSM 11121 / KW20 / Rd), this protein is 1-acyl-sn-glycerol-3-phosphate acyltransferase (plsC).